Reading from the N-terminus, the 373-residue chain is Opsin Rh1 (373 aa).

The Extracellular segment spans residues 1–54 (MDSFAAVATQLGPHFAALSNGSVVDKVTPDMAHLISPYWNQFPAMDPIWAKILT). Asn-20 carries N-linked (GlcNAc...) asparagine glycosylation. Residues 55 to 75 (AYMIIIGMISWCGNGVVIYIF) form a helical membrane-spanning segment. Over 76–86 (ATTKSLRTPAN) the chain is Cytoplasmic. The chain crosses the membrane as a helical span at residues 87-107 (LLVINLAISDFGIMITNTPMM). Residues 108-124 (GINLYFETWVLGPMMCD) are Extracellular-facing. Residues Cys-123 and Cys-200 are joined by a disulfide bond. Residues 125 to 145 (IYAGLGSAFGCSSIWSMCMIS) traverse the membrane as a helical segment. Topologically, residues 146-162 (LDRYQVIVKGMAGRPMT) are cytoplasmic. Residues 163 to 183 (IPLALGKIAYIWFMSSIWCLA) traverse the membrane as a helical segment. The Extracellular portion of the chain corresponds to 184 to 219 (PVFGWSRYVPEGNLTSCGIDYLERDWNPRSYLIFYS). Asn-196 is a glycosylation site (N-linked (GlcNAc...) asparagine). A helical membrane pass occupies residues 220-240 (IFVYYIPLFLICYSYWFIIAA). The Cytoplasmic segment spans residues 241–276 (VSAHEKAMREQAKKMNVKSLRSSEDADKSAEGKLAK). The helical transmembrane segment at 277 to 297 (VALVTISLWFMAWTPYLVINC) threads the bilayer. Residues 298–308 (MGLFKFEGLTP) lie on the Extracellular side of the membrane. Residues 309–331 (LNTIWGACFAKSAACYNPIVYGI) form a helical membrane-spanning segment. At Lys-319 the chain carries N6-(retinylidene)lysine. At 332 to 373 (SHPKYRLALKEKCPCCVFGKVDDGKSSEAQSQATNSEAESKA) the chain is on the cytoplasmic side. The disordered stretch occupies residues 354–373 (DGKSSEAQSQATNSEAESKA). Residues 358–373 (SEAQSQATNSEAESKA) are compositionally biased toward polar residues.

It belongs to the G-protein coupled receptor 1 family. Opsin subfamily. Post-translationally, phosphorylated on some or all of the serine and threonine residues present in the C-terminal region.

The protein resides in the cell projection. It is found in the rhabdomere membrane. Functionally, visual pigments are the light-absorbing molecules that mediate vision. They consist of an apoprotein, opsin, covalently linked to cis-retinal. This is Opsin Rh1 (ninaE) from Drosophila pseudoobscura pseudoobscura (Fruit fly).